Consider the following 234-residue polypeptide: Sugar fermentation stimulation protein A (234 aa).

The H-T-H motif DNA-binding region spans 201–220; the sequence is LLSEAQNKGVEVLAYKAELS.

It belongs to the SfsA family.

Binds to DNA non-specifically. Could be a regulatory factor involved in maltose metabolism. The chain is Sugar fermentation stimulation protein A from Salmonella typhi.